A 194-amino-acid chain; its full sequence is MSNIKLIVGLANPGEKYAQTRHNAGAWYVQELARVCGATLVADSKYFGLTARVTLHGKDVRLLIPSTFMNLSGKSVGAMANFFRIEADEILVAHDELDMEPGVAKFKLGGGHGGHNGLKDIIASLANNKGFYRLRIGIGHPGDKSQVSNYVLGKAPGTEQAAIEDVIDEAVRSTEVLFNQDMAKAMNRLHAYKA.

TRNA is bound at residue Y17. H22 serves as the catalytic Proton acceptor. TRNA is bound by residues F68, N70, and N116.

The protein belongs to the PTH family. Monomer.

It localises to the cytoplasm. It carries out the reaction an N-acyl-L-alpha-aminoacyl-tRNA + H2O = an N-acyl-L-amino acid + a tRNA + H(+). Functionally, hydrolyzes ribosome-free peptidyl-tRNAs (with 1 or more amino acids incorporated), which drop off the ribosome during protein synthesis, or as a result of ribosome stalling. In terms of biological role, catalyzes the release of premature peptidyl moieties from peptidyl-tRNA molecules trapped in stalled 50S ribosomal subunits, and thus maintains levels of free tRNAs and 50S ribosomes. This Shewanella woodyi (strain ATCC 51908 / MS32) protein is Peptidyl-tRNA hydrolase.